The sequence spans 695 residues: C6 finger domain transcription factor nscR (695 aa).

The segment at residues 17–43 (CELCRERKVKCDKLDPCTNCASAGVVC) is a DNA-binding region (zn(2)-C6 fungal-type). A compositionally biased stretch (low complexity) spans 101-113 (SMRSSASQSSNQD). Residues 101–146 (SMRSSASQSSNQDQESRDAIESISNETEDASAPTPDSSRMPLGDGG) form a disordered region.

The protein resides in the nucleus. Transcription factor that specifically regulates the neosartoricin B biosynthesis gene cluster. The polypeptide is C6 finger domain transcription factor nscR (Arthroderma otae (strain ATCC MYA-4605 / CBS 113480) (Microsporum canis)).